We begin with the raw amino-acid sequence, 507 residues long: Ribonuclease Y (507 aa).

Residues 1-21 form a helical membrane-spanning segment; that stretch reads MLWYIVAGAGGLLIGYLIANY. One can recognise a KH domain in the interval 197 to 282; that stretch reads TVSTVSLPSD…EMYEKAKQEV (86 aa). The region spanning 323-416 is the HD domain; it reads VLNHSIEVAL…VAAADALSAA (94 aa).

This sequence belongs to the RNase Y family.

It is found in the cell membrane. Endoribonuclease that initiates mRNA decay. The protein is Ribonuclease Y of Thermotoga sp. (strain RQ2).